Here is a 509-residue protein sequence, read N- to C-terminus: Zinc finger CCCH-type with G patch domain-containing protein (509 aa).

The segment at 155 to 178 adopts a C3H1-type zinc-finger fold; the sequence is PCNYYLEGECRFDEIRCRYSHGAL. The disordered stretch occupies residues 253-277; it reads EEDGLTSEDSSSSPHDESSDEIDSD. One can recognise a G-patch domain in the interval 310 to 356; sequence TRGIGSKLMEKMGYIHGTGLGSEGRGIVTPVSAQILPQGRSLDACME. Positions 409-430 are disordered; it reads GGESRHQGDQAAKKAKTNDLQQ. A compositionally biased stretch (basic and acidic residues) spans 411 to 420; it reads ESRHQGDQAA.

The protein localises to the nucleus. In terms of biological role, transcription repressor. In Drosophila persimilis (Fruit fly), this protein is Zinc finger CCCH-type with G patch domain-containing protein.